Reading from the N-terminus, the 545-residue chain is CTP synthase (545 aa).

The amidoligase domain stretch occupies residues 1-266 (MTTNYIFVTG…DDYICKRFSL (266 aa)). Ser14 contacts CTP. Ser14 serves as a coordination point for UTP. ATP is bound by residues 15-20 (SLGKGI) and Asp72. Positions 72 and 140 each coordinate Mg(2+). Residues 147-149 (DIE), 187-192 (KTKPTQ), and Lys223 each bind CTP. UTP contacts are provided by residues 187–192 (KTKPTQ) and Lys223. 239–241 (KDV) lines the ATP pocket. In terms of domain architecture, Glutamine amidotransferase type-1 spans 291–542 (TIGMVGKYIE…VKAASEFQKR (252 aa)). An L-glutamine-binding site is contributed by Gly352. The Nucleophile; for glutamine hydrolysis role is filled by Cys379. Residues 380-383 (LGMQ), Glu403, and Arg470 contribute to the L-glutamine site. Catalysis depends on residues His515 and Glu517.

Belongs to the CTP synthase family. As to quaternary structure, homotetramer.

It catalyses the reaction UTP + L-glutamine + ATP + H2O = CTP + L-glutamate + ADP + phosphate + 2 H(+). The catalysed reaction is L-glutamine + H2O = L-glutamate + NH4(+). The enzyme catalyses UTP + NH4(+) + ATP = CTP + ADP + phosphate + 2 H(+). Its pathway is pyrimidine metabolism; CTP biosynthesis via de novo pathway; CTP from UDP: step 2/2. Its activity is regulated as follows. Allosterically activated by GTP, when glutamine is the substrate; GTP has no effect on the reaction when ammonia is the substrate. The allosteric effector GTP functions by stabilizing the protein conformation that binds the tetrahedral intermediate(s) formed during glutamine hydrolysis. Inhibited by the product CTP, via allosteric rather than competitive inhibition. In terms of biological role, catalyzes the ATP-dependent amination of UTP to CTP with either L-glutamine or ammonia as the source of nitrogen. Regulates intracellular CTP levels through interactions with the four ribonucleotide triphosphates. This chain is CTP synthase, found in Escherichia coli O127:H6 (strain E2348/69 / EPEC).